The sequence spans 576 residues: Proline--tRNA ligase (576 aa).

The protein belongs to the class-II aminoacyl-tRNA synthetase family. ProS type 1 subfamily. In terms of assembly, homodimer.

Its subcellular location is the cytoplasm. It catalyses the reaction tRNA(Pro) + L-proline + ATP = L-prolyl-tRNA(Pro) + AMP + diphosphate. Catalyzes the attachment of proline to tRNA(Pro) in a two-step reaction: proline is first activated by ATP to form Pro-AMP and then transferred to the acceptor end of tRNA(Pro). As ProRS can inadvertently accommodate and process non-cognate amino acids such as alanine and cysteine, to avoid such errors it has two additional distinct editing activities against alanine. One activity is designated as 'pretransfer' editing and involves the tRNA(Pro)-independent hydrolysis of activated Ala-AMP. The other activity is designated 'posttransfer' editing and involves deacylation of mischarged Ala-tRNA(Pro). The misacylated Cys-tRNA(Pro) is not edited by ProRS. The protein is Proline--tRNA ligase of Leptospira interrogans serogroup Icterohaemorrhagiae serovar copenhageni (strain Fiocruz L1-130).